A 366-amino-acid polypeptide reads, in one-letter code: S-adenosylmethionine:tRNA ribosyltransferase-isomerase (366 aa).

It belongs to the QueA family. In terms of assembly, monomer.

The protein localises to the cytoplasm. The catalysed reaction is 7-aminomethyl-7-carbaguanosine(34) in tRNA + S-adenosyl-L-methionine = epoxyqueuosine(34) in tRNA + adenine + L-methionine + 2 H(+). The protein operates within tRNA modification; tRNA-queuosine biosynthesis. In terms of biological role, transfers and isomerizes the ribose moiety from AdoMet to the 7-aminomethyl group of 7-deazaguanine (preQ1-tRNA) to give epoxyqueuosine (oQ-tRNA). The chain is S-adenosylmethionine:tRNA ribosyltransferase-isomerase from Agrobacterium fabrum (strain C58 / ATCC 33970) (Agrobacterium tumefaciens (strain C58)).